Here is a 58-residue protein sequence, read N- to C-terminus: UPF0391 membrane protein ABO_0024 (58 aa).

2 helical membrane-spanning segments follow: residues 4–24 and 28–48; these read WALT…GGIA and ASIA…SLVV.

It belongs to the UPF0391 family.

It is found in the cell membrane. The protein is UPF0391 membrane protein ABO_0024 of Alcanivorax borkumensis (strain ATCC 700651 / DSM 11573 / NCIMB 13689 / SK2).